We begin with the raw amino-acid sequence, 732 residues long: E3 ubiquitin-protein ligase RNF19B (732 aa).

The tract at residues 1–109 is disordered; it reads MGSEKDSESP…PEEDEAAEGG (109 aa). A required for ubiquitin ligase activity and for protection against staurosporin-induced cell death region spans residues 1–315; that stretch reads MGSEKDSESP…VCGCEFCWLC (315 aa). Residues 54-71 show a composition bias toward pro residues; the sequence is AEPPPPAAPPPPPPPAPA. The segment covering 72–99 has biased composition (low complexity); the sequence is PVEAQAPPVEALPSEPAAEAEAEAVAAG. A compositionally biased stretch (acidic residues) spans 100 to 109; it reads PEEDEAAEGG. Residues 112–334 are TRIAD supradomain; it reads EEVECPLCLV…LSPSGCTFWG (223 aa). 14 residues coordinate Zn(2+): C116, C119, C139, C142, C203, C208, C225, C230, C235, C238, H243, C248, C284, and C287. The segment at 116–165 adopts an RING-type 1 zinc-finger fold; it reads CPLCLVRLPPERAPRLLSCPHRSCRDCLRHYLRLEISESRVPISCPECSE. The segment at 183-248 adopts an IBR-type zinc-finger fold; it reads HKYEEFMLRR…KQIWHPNQTC (66 aa). The RING-type 2; atypical zinc-finger motif lies at 284-315; that stretch reads CPRCSAYIIKMNDGSCNHMTCAVCGCEFCWLC. C299 is an active-site residue. Positions 304, 307, 312, 315, 323, and 330 each coordinate Zn(2+). Transmembrane regions (helical) follow at residues 351-371 and 412-432; these read LIGA…AMVI and VIAA…VYGV. 2 disordered regions span residues 598–644 and 660–732; these read QLVS…QSCE and QPES…YEVE. The span at 674–683 shows a compositional bias: acidic residues; that stretch reads QSDDVPDITS.

The protein belongs to the RBR family. RNF19 subfamily. In terms of assembly, interacts with UBE2L3, UBE2L6 and UCKL1. In terms of tissue distribution, expressed specifically in natural killer cells, activated macrophages and cytotoxic T-cells. Present in macrophages (at protein level). Ubiquitously expressed with high expression in testis.

The protein localises to the cytoplasmic granule membrane. The protein resides in the endoplasmic reticulum membrane. The enzyme catalyses [E2 ubiquitin-conjugating enzyme]-S-ubiquitinyl-L-cysteine + [acceptor protein]-L-lysine = [E2 ubiquitin-conjugating enzyme]-L-cysteine + [acceptor protein]-N(6)-ubiquitinyl-L-lysine.. It participates in protein modification; protein ubiquitination. Functionally, E3 ubiquitin-protein ligase which accepts ubiquitin from E2 ubiquitin-conjugating enzymes UBE2L3 and UBE2L6 in the form of a thioester and then directly transfers the ubiquitin to targeted substrates, such as UCKL1. Involved in the cytolytic activity of natural killer cells and cytotoxic T-cells. Protects against staurosporin-induced cell death. The polypeptide is E3 ubiquitin-protein ligase RNF19B (Rnf19b) (Mus musculus (Mouse)).